The chain runs to 725 residues: Another transcription unit protein (725 aa).

Positions 1–10 are enriched in acidic residues; that stretch reads MGSQNSDDDS. Disordered regions lie at residues 1-379, 566-603, and 617-725; these read MGSQ…PETR, RQAMRNQHKSLPKKKKPGAGEPLIGGGTSSYQHDEGSD, and YKKG…SDND. The segment covering 11–70 has biased composition (low complexity); sequence GSSGSSRSGSRSVTPQGGSAPGSQRSRRSGSGSDRSRSGSRSSRSRSGSGSPRSARSGSA. The segment covering 82-101 has biased composition (basic residues); it reads RSKRSRSAHSRRSGSARSRK. Residues 104 to 116 are compositionally biased toward polar residues; it reads TPESPQSHRSGSL. Positions 117–140 are enriched in low complexity; that stretch reads QSRKSGSPQSRRSGSPQSRKSGST. The segment covering 141–160 has biased composition (basic residues); that stretch reads HSRRSGSAHSRRSGSARSRK. Phosphoserine is present on residues serine 175, serine 186, serine 188, and serine 190. A compositionally biased stretch (basic residues) spans 206 to 223; sequence SRSRSRSRSGSRTSRSRS. A compositionally biased stretch (low complexity) spans 224–242; that stretch reads KTGTPSPNRSRSGSASGSG. Phosphoserine is present on residues serine 265, serine 267, and serine 269. Phosphothreonine is present on threonine 286. 3 positions are modified to phosphoserine: serine 288, serine 290, and serine 312. Residues 306-318 show a composition bias toward acidic residues; the sequence is GDADDISDDEDEA. Basic residues predominate over residues 325-353; it reads SPVRSKSRSQSKSHSHSRSMSHSRSRSRS. A compositionally biased stretch (basic and acidic residues) spans 354–369; the sequence is RSRDKVESQVESAPKE. Serine 355 carries the post-translational modification Phosphoserine. Basic residues predominate over residues 571-582; sequence NQHKSLPKKKKP. At threonine 593 the chain carries Phosphothreonine. Phosphoserine occurs at positions 595, 602, and 631. Position 632 is a phosphothreonine (threonine 632). A phosphoserine mark is found at serine 635, serine 636, and serine 642. Basic and acidic residues predominate over residues 644–665; that stretch reads FEARRSKKVDKAKASKALRDSD. Residues 710 to 725 are compositionally biased toward gly residues; sequence SGSGSGSGSGSGSDND.

In Drosophila melanogaster (Fruit fly), this protein is Another transcription unit protein (Atu).